The primary structure comprises 130 residues: Protein ApaG (130 aa).

Residues 3–127 enclose the ApaG domain; sequence KAETRGISVI…FSLDVPHMRR (125 aa).

The protein is Protein ApaG of Methylobacterium nodulans (strain LMG 21967 / CNCM I-2342 / ORS 2060).